The sequence spans 190 residues: Selenoprotein S (190 aa).

A helical transmembrane segment spans residues 28 to 48; the sequence is SLLATYGWYIVFCCILLYVVF. The tract at residues 78-90 is VCP/p97-interacting motif (VIM); that stretch reads RQEALAAARLKMQ. Residues 115–138 are compositionally biased toward basic and acidic residues; that stretch reads KIERWDSVQEGRSYRGDARKRQEE. Positions 115 to 190 are disordered; it reads KIERWDSVQE…RRGPSSGGUG (76 aa). Ser-140 bears the Phosphoserine mark. The segment covering 160 to 174 has biased composition (gly residues); it reads RGGGYNPLSGEGGGA. Residue Sec-189 is a non-standard amino acid, selenocysteine.

Belongs to the selenoprotein S family. As to quaternary structure, interacts with DERL1 and (via VIM motif) with VCP, suggesting that it forms a membrane complex with DERL1 that serves as a receptor for VCP. Also interacts with DERL2, DERL3 and SELENOK. The SELENOK-SELENOS complex interacts with VCP. Truncated SELENOS proteins produced by failed UGA/Sec decoding are ubiquitinated by the CRL2(KLHDC2) and CRL2(KLHDC3) complexes, which recognizes the glycine (Gly) at the C-terminus of truncated SELENOS proteins. Truncated SELENOS proteins produced by failed UGA/Sec decoding are also ubiquitinated by the CRL5(KLHDC1) complex. Ubiquitously expressed. Highest expression in liver and lung, with lower levels detected in spleen, kidney, brain, lymph nodes, small intestine, stomach and heart. Very low expression detected in longissimus dorsi.

It is found in the cytoplasm. The protein localises to the endoplasmic reticulum membrane. Involved in the degradation process of misfolded endoplasmic reticulum (ER) luminal proteins. Participates in the transfer of misfolded proteins from the ER to the cytosol, where they are destroyed by the proteasome in a ubiquitin-dependent manner. Probably acts by serving as a linker between DERL1, which mediates the retrotranslocation of misfolded proteins into the cytosol, and the ATPase complex VCP, which mediates the translocation and ubiquitination. The polypeptide is Selenoprotein S (Sus scrofa (Pig)).